The sequence spans 283 residues: Urease accessory protein UreD (283 aa).

The interval 1 to 20 (MTQTQPVGTLRLTIDDQGPQ) is disordered.

The protein belongs to the UreD family. UreD, UreF and UreG form a complex that acts as a GTP-hydrolysis-dependent molecular chaperone, activating the urease apoprotein by helping to assemble the nickel containing metallocenter of UreC. The UreE protein probably delivers the nickel.

Its subcellular location is the cytoplasm. Its function is as follows. Required for maturation of urease via the functional incorporation of the urease nickel metallocenter. This is Urease accessory protein UreD from Corynebacterium glutamicum (strain R).